We begin with the raw amino-acid sequence, 283 residues long: Bifunctional protein FolD (283 aa).

NADP(+)-binding positions include 165–167 (GRG), Thr-192, and Val-233.

The protein belongs to the tetrahydrofolate dehydrogenase/cyclohydrolase family. In terms of assembly, homodimer.

It carries out the reaction (6R)-5,10-methylene-5,6,7,8-tetrahydrofolate + NADP(+) = (6R)-5,10-methenyltetrahydrofolate + NADPH. It catalyses the reaction (6R)-5,10-methenyltetrahydrofolate + H2O = (6R)-10-formyltetrahydrofolate + H(+). Its pathway is one-carbon metabolism; tetrahydrofolate interconversion. Functionally, catalyzes the oxidation of 5,10-methylenetetrahydrofolate to 5,10-methenyltetrahydrofolate and then the hydrolysis of 5,10-methenyltetrahydrofolate to 10-formyltetrahydrofolate. The protein is Bifunctional protein FolD of Mycolicibacterium smegmatis (strain ATCC 700084 / mc(2)155) (Mycobacterium smegmatis).